A 421-amino-acid chain; its full sequence is MFALIDVNGMYASCEQAFRPDLANRAVAVLSNNDGNIVARNYLAKKAGLKMGDPYFKVRPIIERHNIAIFSSNYTLYASMSARFAAVVESLASHVEQYSIDELFVDCKGITAAMSLDAFGRQLREEVRRHTTLVCGVGIARTKTLAKLCNHAAKTWPATGGVVALDDGARLKKLMSILPVAEVWGVGHRTEKALATMGIKTVLDLARADTRLIRKTFGVVLERTVRELRGEACFSLEENPPAKQQIVVSRSFGQRVETLTDMQQAVTGFAARAAEKLRNERQYCRVISVFIRTSPYSVRDTQYANQATEKLTVATQDSRTIIQAAQAALARIWREDIAYAKAGVMLADFSGKEAQLDLFDSATPSAGSEALMAVLDGINRRGKNQLFFAGQGIDNSFAMRRQMLSPDYTTDWRSIPIATIK.

A UmuC domain is found at 2–187 (FALIDVNGMY…LPVAEVWGVG (186 aa)).

It belongs to the DNA polymerase type-Y family.

In terms of biological role, involved in UV protection and mutation. This chain is Protein MucB (mucB), found in Salmonella typhimurium.